We begin with the raw amino-acid sequence, 52 residues long: Phospholamban (52 aa).

Residue M1 is modified to N-acetylmethionine. The Cytoplasmic portion of the chain corresponds to 1 to 31 (MEKVQYITRSALRRASTLEVNPQARQRLQEL). S16 carries the phosphoserine; by PKA modification. Residue T17 is modified to Phosphothreonine; by CaMK. The chain crosses the membrane as a helical span at residues 32–52 (FVNFCLILICLLLICIIVMLL).

The protein belongs to the phospholamban family. As to quaternary structure, homopentamer. Phosphorylated in response to beta-adrenergic stimulation. Phosphorylation by PKA abolishes the inhibition of ATP2A2-mediated calcium uptake. As to expression, heart.

It is found in the endoplasmic reticulum membrane. Its subcellular location is the sarcoplasmic reticulum membrane. The protein localises to the mitochondrion membrane. It localises to the membrane. In terms of biological role, reversibly inhibits the activity of ATP2A2/SERCA2 in cardiac sarcoplasmic reticulum by decreasing the apparent affinity of the ATPase for Ca(2+). Binds preferentially to the ATP-bound E1 conformational form of ATP2A2 which predominates at low Ca(2+) concentrations during the diastolic phase of the cardiac cycle. Inhibits ATP2A2 Ca(2+) affinity by disrupting its allosteric activation by ATP. Modulates the contractility of the heart muscle in response to physiological stimuli via its effects on ATP2A2. Modulates calcium re-uptake during muscle relaxation and plays an important role in calcium homeostasis in the heart muscle. The degree of ATP2A2 inhibition depends on the oligomeric state of PLN. ATP2A2 inhibition is alleviated by PLN phosphorylation. The polypeptide is Phospholamban (PLN) (Gallus gallus (Chicken)).